Reading from the N-terminus, the 151-residue chain is Putative pre-16S rRNA nuclease (151 aa).

The protein belongs to the YqgF nuclease family.

It localises to the cytoplasm. Functionally, could be a nuclease involved in processing of the 5'-end of pre-16S rRNA. The polypeptide is Putative pre-16S rRNA nuclease (Bifidobacterium adolescentis (strain ATCC 15703 / DSM 20083 / NCTC 11814 / E194a)).